Reading from the N-terminus, the 494-residue chain is MAENQTTAAPETAAEPTAGRVTRIQGSVIDVEFPVGHLPDIYNALTVELANTGVHEEGETTKKITLEVEQHLGDSTVRTVALKPTDGLVRGATVYDTGGPISVPVGDVTKGHVFDVSGNILNKKADETVKVTERWPIHRNPPAFDQLESKTQMFETGIKVIDLLTPYVQGGKIGLFGGAGVGKTVLIQEMIQRVAQNHGGVSVFAGVGERTREGNDLIGEMDEAGVLEKTALVFGQMDEQPGTRLRVPLTALTMAEYFRDVQNQDVLLFIDNIFRFTQAGSEVSTLLGRMPSAVGYQPNLADEMGALQERITSTRGHSITSLQAIYVPADDYTDPAPATTFAHLDATTELSRDIASKGIYPAVDPLSSTSRILDPRYVGQAHYDCANRVKAILQRNKELQDIIALIGIDELGEEDKTTVNRARKIEQFLGQNFYVAEKFTGRPGSYVPADETIEAFTRICDGVYDDVPEQAFSGIGGIDDLEKKWHDMQKEYGA.

177 to 184 is an ATP binding site; the sequence is GGAGVGKT.

The protein belongs to the ATPase alpha/beta chains family. As to quaternary structure, F-type ATPases have 2 components, CF(1) - the catalytic core - and CF(0) - the membrane proton channel. CF(1) has five subunits: alpha(3), beta(3), gamma(1), delta(1), epsilon(1). CF(0) has three main subunits: a(1), b(2) and c(9-12). The alpha and beta chains form an alternating ring which encloses part of the gamma chain. CF(1) is attached to CF(0) by a central stalk formed by the gamma and epsilon chains, while a peripheral stalk is formed by the delta and b chains.

It is found in the cell membrane. It carries out the reaction ATP + H2O + 4 H(+)(in) = ADP + phosphate + 5 H(+)(out). Produces ATP from ADP in the presence of a proton gradient across the membrane. The catalytic sites are hosted primarily by the beta subunits. The polypeptide is ATP synthase subunit beta (Bifidobacterium adolescentis (strain ATCC 15703 / DSM 20083 / NCTC 11814 / E194a)).